Consider the following 508-residue polypeptide: Matrix metalloproteinase-19 (508 aa).

A signal peptide spans Met1–Gly18. Residues Arg19–Lys97 constitute a propeptide that is removed on maturation. Positions Pro83–Pro90 match the Cysteine switch motif. Zn(2+) contacts are provided by Cys85 and His212. The active site involves Glu213. Residues His216 and His222 each contribute to the Zn(2+) site. The tract at residues Ile262–Pro288 is disordered. Residues Thr274–Asp287 are compositionally biased toward pro residues. Hemopexin repeat units follow at residues Pro286–Leu333, Pro334–Leu380, Asp381–Val425, and Pro426–Cys472. The cysteines at positions 289 and 472 are disulfide-linked. An N-linked (GlcNAc...) asparagine glycan is attached at Asn464.

The protein belongs to the peptidase M10A family. Requires Zn(2+) as cofactor. It depends on Ca(2+) as a cofactor. Post-translationally, activated by autolytic cleavage after Lys-97. Tyrosine phosphorylated by PKDCC/VLK. In terms of tissue distribution, expressed in mammary gland, placenta, lung, pancreas, ovary, small intestine, spleen, thymus, prostate, testis colon, heart and blood vessel walls. Not detected in brain and peripheral blood leukocytes. Also expressed in the synovial fluid of normal and rheumatoid patients.

It localises to the secreted. The protein localises to the extracellular space. It is found in the extracellular matrix. Strongly inhibited by TIMP-2, TIMP-3 and TIMP-4, while TIMP-1 is less efficient. Its function is as follows. Endopeptidase that degrades various components of the extracellular matrix, such as aggrecan and cartilage oligomeric matrix protein (comp), during development, haemostasis and pathological conditions (arthritic disease). May also play a role in neovascularization or angiogenesis. Hydrolyzes collagen type IV, laminin, nidogen, nascin-C isoform, fibronectin, and type I gelatin. The protein is Matrix metalloproteinase-19 (MMP19) of Homo sapiens (Human).